Here is a 345-residue protein sequence, read N- to C-terminus: Anthranilate phosphoribosyltransferase (345 aa).

5-phospho-alpha-D-ribose 1-diphosphate-binding positions include Gly80, 83–84 (GD), Thr88, 90–93 (NIST), 108–116 (KHGNRSVSS), and Ser120. Anthranilate is bound at residue Gly80. Ser92 is a binding site for Mg(2+). Asn111 contributes to the anthranilate binding site. Arg166 contacts anthranilate. Mg(2+) is bound by residues Asp225 and Glu226.

The protein belongs to the anthranilate phosphoribosyltransferase family. In terms of assembly, homodimer. Mg(2+) is required as a cofactor.

The catalysed reaction is N-(5-phospho-beta-D-ribosyl)anthranilate + diphosphate = 5-phospho-alpha-D-ribose 1-diphosphate + anthranilate. It participates in amino-acid biosynthesis; L-tryptophan biosynthesis; L-tryptophan from chorismate: step 2/5. Its function is as follows. Catalyzes the transfer of the phosphoribosyl group of 5-phosphorylribose-1-pyrophosphate (PRPP) to anthranilate to yield N-(5'-phosphoribosyl)-anthranilate (PRA). The protein is Anthranilate phosphoribosyltransferase of Pelotomaculum thermopropionicum (strain DSM 13744 / JCM 10971 / SI).